A 351-amino-acid polypeptide reads, in one-letter code: Rhodopsin (351 aa).

The Extracellular segment spans residues 1 to 36 (MNGTEGPYFYVPMVNTTGVVRSPYEYPQYYLVNPAA). 2 N-linked (GlcNAc...) asparagine glycosylation sites follow: asparagine 2 and asparagine 15. Residues 37–61 (FAVLGAYMFFLIIFGFPINFLTLYV) form a helical membrane-spanning segment. Residues 62 to 73 (TLEHKKLRTPLN) are Cytoplasmic-facing. A helical membrane pass occupies residues 74–96 (YILLNLAVADLFMVIGGFTTTMY). At 97–110 (SSMHGYFVLGRLGC) the chain is on the extracellular side. A disulfide bond links cysteine 110 and cysteine 187. The helical transmembrane segment at 111-133 (NLEGFSATLGGMISLWSLAVLAI) threads the bilayer. The 'Ionic lock' involved in activated form stabilization signature appears at 134–136 (ERW). Topologically, residues 134 to 152 (ERWVVVCKPTSNFRFGENH) are cytoplasmic. The chain crosses the membrane as a helical span at residues 153 to 173 (AIMGVSLTWTMALACTVPPLV). Over 174 to 202 (GWSRYIPEGMQCSCGIDYYTRAEGFNNES) the chain is Extracellular. Asparagine 200 is a glycosylation site (N-linked (GlcNAc...) asparagine). The chain crosses the membrane as a helical span at residues 203–224 (FVLYMFFCHFMVPLIIIFFCYG). Topologically, residues 225 to 252 (RLLCAVKEAAAAQQESETTQRAEREVTR) are cytoplasmic. A helical membrane pass occupies residues 253–274 (MVILMVIGYLVCWLPYASVAWF). Residues 275 to 286 (IFTHQGSEFGPL) are Extracellular-facing. The chain crosses the membrane as a helical span at residues 287–308 (FMTIPAFFAKSSSIYNPVIYIC). Lysine 296 carries the N6-(retinylidene)lysine modification. Residues 309–351 (MNKQFRNCMITTLFCGKNPFEGEEEGASSTKTEASSASSVSPA) lie on the Cytoplasmic side of the membrane. Cysteine 323 is lipidated: S-palmitoyl cysteine. The tract at residues 330-351 (GEEEGASSTKTEASSASSVSPA) is disordered. The segment covering 335 to 351 (ASSTKTEASSASSVSPA) has biased composition (low complexity).

The protein belongs to the G-protein coupled receptor 1 family. Opsin subfamily. Post-translationally, phosphorylated on some or all of the serine and threonine residues present in the C-terminal region. In terms of processing, contains one covalently linked retinal chromophore.

It localises to the membrane. The protein resides in the cell projection. Its subcellular location is the cilium. It is found in the photoreceptor outer segment. Its function is as follows. Photoreceptor required for image-forming vision at low light intensity. While most salt water fish species use retinal as chromophore, most freshwater fish use 3-dehydroretinal, or a mixture of retinal and 3-dehydroretinal. Light-induced isomerization of 11-cis to all-trans retinal triggers a conformational change that activates signaling via G-proteins. Subsequent receptor phosphorylation mediates displacement of the bound G-protein alpha subunit by arrestin and terminates signaling. This is Rhodopsin (rho) from Neoniphon sammara (Spotfin squirrelfish).